A 23-amino-acid chain; its full sequence is Dermaseptin-4 (23 aa).

A Glutamine amide modification is found at Gln23.

Expressed by the skin glands.

It localises to the secreted. Functionally, antimicrobial peptide, active against the Gram-positive bacterium S.aureus, and the Gram-negative bacteria E.coli and P.aeruginosa. Has hemolytic activity (5% hemolysis at 128 ug/ml). This is Dermaseptin-4 from Phyllomedusa tarsius (Brownbelly leaf frog).